The sequence spans 339 residues: MVIQKNWQELIKPNKLQVTAGDDPKRVATVVAEPLERGFGTTLGNSLRRVLLSSLQGAAVTSVQIDGVLHEFSSIPGVREDVTDIVLNIKTIAIRSQTDQPKRMTLRKTGPGLVTAGDIGAVGDIQILNPDLVICTLDDGAEIRMEFTVATGKGYVPAERNRPEDAPIGLIPVDALYSPVTKVSYRVETTREGQDLDKDKLTITLETNGAVSPEDALAYAARIIQDQLQVFVNFEEPRKEEAAPLAPQLPFNPALLKKVDELELSVRSANCLKNDNIVYIGDLIQKSEGEMLRTPNFGRKSLNEIKEVLAGMGLHLGMDVPGWPPENIEDLAKRFEEHY.

Positions 1 to 235 (MVIQKNWQEL…DQLQVFVNFE (235 aa)) are alpha N-terminal domain (alpha-NTD). The alpha C-terminal domain (alpha-CTD) stretch occupies residues 251 to 339 (FNPALLKKVD…DLAKRFEEHY (89 aa)).

It belongs to the RNA polymerase alpha chain family. As to quaternary structure, homodimer. The RNAP catalytic core consists of 2 alpha, 1 beta, 1 beta' and 1 omega subunit. When a sigma factor is associated with the core the holoenzyme is formed, which can initiate transcription.

It carries out the reaction RNA(n) + a ribonucleoside 5'-triphosphate = RNA(n+1) + diphosphate. Functionally, DNA-dependent RNA polymerase catalyzes the transcription of DNA into RNA using the four ribonucleoside triphosphates as substrates. The sequence is that of DNA-directed RNA polymerase subunit alpha from Methylorubrum extorquens (strain CM4 / NCIMB 13688) (Methylobacterium extorquens).